Here is a 357-residue protein sequence, read N- to C-terminus: U5 small nuclear ribonucleoprotein 40 kDa protein (357 aa).

Lys-18 participates in a covalent cross-link: Glycyl lysine isopeptide (Lys-Gly) (interchain with G-Cter in SUMO2). Residue Arg-21 is modified to Asymmetric dimethylarginine. 7 WD repeats span residues 64–103 (GHEG…GNYA), 107–146 (GYSG…RVKR), 149–189 (GHTS…AIQT), 191–230 (QNTY…LTYT), 233–272 (GHAD…PKER), 283–322 (NFEK…ILYK), and 325–357 (GHAG…GEIQ). Lys-270 participates in a covalent cross-link: Glycyl lysine isopeptide (Lys-Gly) (interchain with G-Cter in SUMO2).

Component of the pre-catalytic and catalytic spliceosome complexes. Component of the postcatalytic spliceosome P complex. Part of the U5 snRNP complex. Interacts with PRPF8. Component of the U4/U6-U5 tri-snRNP complex composed of the U4, U6 and U5 snRNAs and at least PRPF3, PRPF4, PRPF6, PRPF8, PRPF31, SNRNP200, TXNL4A, WDR57, SNRNP40, DDX23, CD2BP2, PPIH, SNU13, EFTUD2, SART1 and USP39. Component of the minor spliceosome, which splices U12-type introns.

It localises to the nucleus. Its function is as follows. Required for pre-mRNA splicing as component of the activated spliceosome. Component of the U5 small nuclear ribonucleoprotein (snRNP) complex and the U4/U6-U5 tri-snRNP complex, building blocks of the spliceosome. As a component of the minor spliceosome, involved in the splicing of U12-type introns in pre-mRNAs. The protein is U5 small nuclear ribonucleoprotein 40 kDa protein (SNRNP40) of Pongo abelii (Sumatran orangutan).